The chain runs to 485 residues: Betaine aldehyde dehydrogenase (485 aa).

Residues Thr23, Ile24, and Asp90 each coordinate K(+). An NAD(+)-binding site is contributed by 147–149 (GAW). The active-site Charge relay system is the Lys159. NAD(+)-binding positions include 173 to 176 (KPSE) and 226 to 229 (EVGT). Residue Leu241 participates in K(+) binding. The active-site Proton acceptor is the Glu247. Residues Gly249, Cys281, and Glu382 each contribute to the NAD(+) site. The active-site Nucleophile is the Cys281. Cysteine sulfenic acid (-SOH) is present on Cys281. Residues Lys452 and Gly455 each contribute to the K(+) site. The active-site Charge relay system is Glu459.

This sequence belongs to the aldehyde dehydrogenase family. As to quaternary structure, dimer of dimers. K(+) serves as cofactor.

The enzyme catalyses betaine aldehyde + NAD(+) + H2O = glycine betaine + NADH + 2 H(+). It functions in the pathway amine and polyamine biosynthesis; betaine biosynthesis via choline pathway; betaine from betaine aldehyde: step 1/1. Involved in the biosynthesis of the osmoprotectant glycine betaine. Catalyzes the irreversible oxidation of betaine aldehyde to the corresponding acid. This Marinomonas sp. (strain MWYL1) protein is Betaine aldehyde dehydrogenase.